We begin with the raw amino-acid sequence, 517 residues long: Bifunctional purine biosynthesis protein PurH (517 aa).

An MGS-like domain is found at Met-1 to Val-145.

Belongs to the PurH family.

It carries out the reaction (6R)-10-formyltetrahydrofolate + 5-amino-1-(5-phospho-beta-D-ribosyl)imidazole-4-carboxamide = 5-formamido-1-(5-phospho-D-ribosyl)imidazole-4-carboxamide + (6S)-5,6,7,8-tetrahydrofolate. The catalysed reaction is IMP + H2O = 5-formamido-1-(5-phospho-D-ribosyl)imidazole-4-carboxamide. Its pathway is purine metabolism; IMP biosynthesis via de novo pathway; 5-formamido-1-(5-phospho-D-ribosyl)imidazole-4-carboxamide from 5-amino-1-(5-phospho-D-ribosyl)imidazole-4-carboxamide (10-formyl THF route): step 1/1. The protein operates within purine metabolism; IMP biosynthesis via de novo pathway; IMP from 5-formamido-1-(5-phospho-D-ribosyl)imidazole-4-carboxamide: step 1/1. The polypeptide is Bifunctional purine biosynthesis protein PurH (Prochlorococcus marinus (strain MIT 9301)).